The primary structure comprises 94 residues: ESAT-6-like protein EsxI (94 aa).

It belongs to the WXG100 family. ESAT-6 subfamily.

The protein resides in the secreted. The polypeptide is ESAT-6-like protein EsxI (Mycobacterium tuberculosis (strain CDC 1551 / Oshkosh)).